The following is a 427-amino-acid chain: 3-phosphoshikimate 1-carboxyvinyltransferase (427 aa).

The 3-phosphoshikimate site is built by Lys-22, Ser-23, and Arg-27. Lys-22 is a binding site for phosphoenolpyruvate. Phosphoenolpyruvate contacts are provided by Gly-96 and Arg-124. Residues Ser-169, Ser-170, Gln-171, Ser-197, Asp-313, Asn-336, and Lys-340 each coordinate 3-phosphoshikimate. Phosphoenolpyruvate is bound at residue Gln-171. The active-site Proton acceptor is Asp-313. Residues Arg-344, Arg-386, and Lys-411 each contribute to the phosphoenolpyruvate site.

This sequence belongs to the EPSP synthase family. As to quaternary structure, monomer.

It is found in the cytoplasm. It catalyses the reaction 3-phosphoshikimate + phosphoenolpyruvate = 5-O-(1-carboxyvinyl)-3-phosphoshikimate + phosphate. Its pathway is metabolic intermediate biosynthesis; chorismate biosynthesis; chorismate from D-erythrose 4-phosphate and phosphoenolpyruvate: step 6/7. In terms of biological role, catalyzes the transfer of the enolpyruvyl moiety of phosphoenolpyruvate (PEP) to the 5-hydroxyl of shikimate-3-phosphate (S3P) to produce enolpyruvyl shikimate-3-phosphate and inorganic phosphate. The chain is 3-phosphoshikimate 1-carboxyvinyltransferase from Enterobacter sp. (strain 638).